The primary structure comprises 494 residues: Amidophosphoribosyltransferase (494 aa).

A propeptide spanning residues 1–10 is cleaved from the precursor; the sequence is MFNYSGLNEE. Cysteine 11 serves as the catalytic Nucleophile. Residues 11-231 form the Glutamine amidotransferase type-2 domain; that stretch reads CGVFGIWNHP…AGEYVVINDK (221 aa). Residues serine 294, aspartate 356, and aspartate 357 each coordinate Mg(2+).

It in the C-terminal section; belongs to the purine/pyrimidine phosphoribosyltransferase family. Mg(2+) is required as a cofactor.

It catalyses the reaction 5-phospho-beta-D-ribosylamine + L-glutamate + diphosphate = 5-phospho-alpha-D-ribose 1-diphosphate + L-glutamine + H2O. Its pathway is purine metabolism; IMP biosynthesis via de novo pathway; N(1)-(5-phospho-D-ribosyl)glycinamide from 5-phospho-alpha-D-ribose 1-diphosphate: step 1/2. In terms of biological role, catalyzes the formation of phosphoribosylamine from phosphoribosylpyrophosphate (PRPP) and glutamine. The sequence is that of Amidophosphoribosyltransferase from Staphylococcus aureus (strain MRSA252).